A 123-amino-acid polypeptide reads, in one-letter code: Large ribosomal subunit protein uL14 (123 aa).

It belongs to the universal ribosomal protein uL14 family. As to quaternary structure, part of the 50S ribosomal subunit. Forms a cluster with proteins L3 and L19. In the 70S ribosome, L14 and L19 interact and together make contacts with the 16S rRNA in bridges B5 and B8.

In terms of biological role, binds to 23S rRNA. Forms part of two intersubunit bridges in the 70S ribosome. The sequence is that of Large ribosomal subunit protein uL14 from Escherichia coli O6:K15:H31 (strain 536 / UPEC).